Reading from the N-terminus, the 189-residue chain is dCTP deaminase (189 aa).

DCTP-binding positions include K112–R117, T136–E138, Q157, Y171, and Q181. The active-site Proton donor/acceptor is the E138.

Belongs to the dCTP deaminase family. As to quaternary structure, homotrimer.

The catalysed reaction is dCTP + H2O + H(+) = dUTP + NH4(+). The protein operates within pyrimidine metabolism; dUMP biosynthesis; dUMP from dCTP (dUTP route): step 1/2. Catalyzes the deamination of dCTP to dUTP. This Alcanivorax borkumensis (strain ATCC 700651 / DSM 11573 / NCIMB 13689 / SK2) protein is dCTP deaminase.